A 233-amino-acid chain; its full sequence is Ion-translocating oxidoreductase complex subunit E (233 aa).

6 helical membrane-spanning segments follow: residues 18–38, 39–59, 69–89, 92–112, 128–148, and 182–202; these read ALVQ…ATNA, LGLG…VSAL, IPIY…LINA, FGLY…CIVI, ALDG…LGAL, and PFLL…LLAG.

This sequence belongs to the NqrDE/RnfAE family. As to quaternary structure, the complex is composed of six subunits: RnfA, RnfB, RnfC, RnfD, RnfE and RnfG.

Its subcellular location is the cell inner membrane. In terms of biological role, part of a membrane-bound complex that couples electron transfer with translocation of ions across the membrane. In Yersinia pseudotuberculosis serotype IB (strain PB1/+), this protein is Ion-translocating oxidoreductase complex subunit E.